A 347-amino-acid chain; its full sequence is MINSISNTVLLKSVVSKRFFSSSAKMSSQAKPRHLVSMLELSIKELESLVNRAAYHKQQIRSGLVNTTQPLSGKTVSLIFNKRSTRTRVSSEGAAAYLGGCPMFLGKDDIQLGVNESLHDTTKIISSMTSSIFARVNKHSDIQEMCKYSSVPIINALCDTFHPLQAITDILTIKESFGNTTKGLKLAWIGDVNNVINDLCIAALKSGIDVSIAVPSGLKFEELILSGAKEISAENGTTLKITNDPLEAINGANVIVTDTWISMGQEDERLQKLKQFEGFQITKEMISKGKAAENWKFMHCLPRHPEEVHDEVFYDEERSLVFEEGENRLYAAIAVLEGFVVNKGKLL.

Residues 1 to 25 (MINSISNTVLLKSVVSKRFFSSSAK) constitute a mitochondrion transit peptide. Carbamoyl phosphate contacts are provided by residues 84-87 (STRT), Arg135, His162, and Gln165. 4 residues coordinate L-ornithine: Asn194, Asp258, Ser262, and Met263. The active-site Proton acceptor is Cys300. Residues 300–301 (CL) and Arg328 contribute to the carbamoyl phosphate site.

This sequence belongs to the aspartate/ornithine carbamoyltransferase superfamily. OTCase family.

It localises to the mitochondrion matrix. It carries out the reaction carbamoyl phosphate + L-ornithine = L-citrulline + phosphate + H(+). It participates in amino-acid biosynthesis; L-arginine biosynthesis; L-arginine from L-ornithine and carbamoyl phosphate: step 1/3. The polypeptide is Ornithine transcarbamylase, mitochondrial (OTC) (Pachysolen tannophilus (Yeast)).